Consider the following 374-residue polypeptide: Queuine tRNA-ribosyltransferase (374 aa).

Asp89 serves as the catalytic Proton acceptor. Substrate-binding positions include 89 to 93 (DSGGF), Asp143, Gln187, and Gly214. Positions 245 to 251 (GVGKPED) are RNA binding. The Nucleophile role is filled by Asp264. Residues 269 to 273 (TRNAR) are RNA binding; important for wobble base 34 recognition. Positions 302, 304, 307, and 333 each coordinate Zn(2+).

It belongs to the queuine tRNA-ribosyltransferase family. As to quaternary structure, homodimer. Within each dimer, one monomer is responsible for RNA recognition and catalysis, while the other monomer binds to the replacement base PreQ1. Zn(2+) serves as cofactor.

The catalysed reaction is 7-aminomethyl-7-carbaguanine + guanosine(34) in tRNA = 7-aminomethyl-7-carbaguanosine(34) in tRNA + guanine. The protein operates within tRNA modification; tRNA-queuosine biosynthesis. Its function is as follows. Catalyzes the base-exchange of a guanine (G) residue with the queuine precursor 7-aminomethyl-7-deazaguanine (PreQ1) at position 34 (anticodon wobble position) in tRNAs with GU(N) anticodons (tRNA-Asp, -Asn, -His and -Tyr). Catalysis occurs through a double-displacement mechanism. The nucleophile active site attacks the C1' of nucleotide 34 to detach the guanine base from the RNA, forming a covalent enzyme-RNA intermediate. The proton acceptor active site deprotonates the incoming PreQ1, allowing a nucleophilic attack on the C1' of the ribose to form the product. After dissociation, two additional enzymatic reactions on the tRNA convert PreQ1 to queuine (Q), resulting in the hypermodified nucleoside queuosine (7-(((4,5-cis-dihydroxy-2-cyclopenten-1-yl)amino)methyl)-7-deazaguanosine). The polypeptide is Queuine tRNA-ribosyltransferase (Serratia proteamaculans (strain 568)).